Reading from the N-terminus, the 206-residue chain is Eukaryotic translation initiation factor isoform 4E-2 (206 aa).

Cysteines 103 and 142 form a disulfide.

Belongs to the eukaryotic initiation factor 4E family. EIF4F is a multi-subunit complex, the composition of which varies with external and internal environmental conditions. It is composed of at least EIF4A, EIF4E and EIF4G. EIF4E is also known to interact with other partners. In higher plants two isoforms of EIF4F have been identified, named isoform EIF4F and isoform EIF(iso)4F. Isoform EIF4F has subunits p220 and p26, whereas isoform EIF(iso)4F has subunits p82 and p28. In terms of processing, according to the redox status, the Cys-103-Cys-142 disulfide bridge may have a role in regulating protein function by affecting its ability to bind capped mRNA.

In terms of biological role, recognizes and binds the 7-methylguanosine-containing mRNA cap during an early step in the initiation of protein synthesis and facilitates ribosome binding by inducing the unwinding of the mRNAs secondary structures. In Oryza sativa subsp. japonica (Rice), this protein is Eukaryotic translation initiation factor isoform 4E-2.